Reading from the N-terminus, the 81-residue chain is Acyl carrier protein (81 aa).

A Carrier domain is found at 2–80; it reads ASNEEILAGL…DAVSYIASAQ (79 aa). O-(pantetheine 4'-phosphoryl)serine is present on S40.

The protein belongs to the acyl carrier protein (ACP) family. 4'-phosphopantetheine is transferred from CoA to a specific serine of apo-ACP by AcpS. This modification is essential for activity because fatty acids are bound in thioester linkage to the sulfhydryl of the prosthetic group.

It is found in the cytoplasm. It functions in the pathway lipid metabolism; fatty acid biosynthesis. Functionally, carrier of the growing fatty acid chain in fatty acid biosynthesis. This chain is Acyl carrier protein, found in Renibacterium salmoninarum (strain ATCC 33209 / DSM 20767 / JCM 11484 / NBRC 15589 / NCIMB 2235).